Consider the following 461-residue polypeptide: ATP synthase subunit beta (461 aa).

An ATP-binding site is contributed by 151 to 158; sequence GGAGVGKT.

Belongs to the ATPase alpha/beta chains family. As to quaternary structure, F-type ATPases have 2 components, CF(1) - the catalytic core - and CF(0) - the membrane proton channel. CF(1) has five subunits: alpha(3), beta(3), gamma(1), delta(1), epsilon(1). CF(0) has three main subunits: a(1), b(2) and c(9-12). The alpha and beta chains form an alternating ring which encloses part of the gamma chain. CF(1) is attached to CF(0) by a central stalk formed by the gamma and epsilon chains, while a peripheral stalk is formed by the delta and b chains.

It localises to the cell inner membrane. The catalysed reaction is ATP + H2O + 4 H(+)(in) = ADP + phosphate + 5 H(+)(out). In terms of biological role, produces ATP from ADP in the presence of a proton gradient across the membrane. The catalytic sites are hosted primarily by the beta subunits. The chain is ATP synthase subunit beta from Idiomarina loihiensis (strain ATCC BAA-735 / DSM 15497 / L2-TR).